The primary structure comprises 477 residues: Actin-related protein 7 (477 aa).

It belongs to the actin family. As to quaternary structure, forms a heterodimer with ARP9. Interacts with NPL6. Component of the two forms of the RSC complex composed of at least either RSC1 or RSC2, and ARP7, ARP9, LDB7, NPL6, RSC3, RSC30, RSC4, RSC58, RSC6, RSC8, RSC9, SFH1, STH1, HTL1 and probably RTT102. The complexes interact with histone and histone variant components of centromeric chromatin. Component of the SWI/SNF global transcription activator complex. The 1.14 MDa SWI/SNF complex is composed of 11 different subunits: one copy each of SWI1, SNF2/SWI2, SNF5, SNF12/SWP73, ARP7/SWP61, ARP9/SWP59; two copies each of SWI3, SNF6, SNF11, SWP82; and three copies of TAF14/SWP29.

Its subcellular location is the nucleus. In terms of biological role, component of the chromatin structure remodeling complex (RSC), which is involved in transcription regulation and nucleosome positioning. RSC is responsible for the transfer of a histone octamer from a nucleosome core particle to naked DNA. The reaction requires ATP and involves an activated RSC-nucleosome intermediate. Remodeling reaction also involves DNA translocation, DNA twist and conformational change. As a reconfigurer of centromeric and flanking nucleosomes, RSC complex is required both for proper kinetochore function in chromosome segregation and, via a PKC1-dependent signaling pathway, for organization of the cellular cytoskeleton. This subunit is involved in transcriptional regulation. Heterodimer of ARP7 and ARP9 functions with HMG box proteins to facilitate proper chromatin architecture. Heterodimer formation is necessary for assembly into RSC complex. Part of the SWI/SNF complex, an ATP-dependent chromatin remodeling complex, is required for the positive and negative regulation of gene expression of a large number of genes. It changes chromatin structure by altering DNA-histone contacts within a nucleosome, leading eventually to a change in nucleosome position, thus facilitating or repressing binding of gene-specific transcription factors. The protein is Actin-related protein 7 (ARP7) of Saccharomyces cerevisiae (strain ATCC 204508 / S288c) (Baker's yeast).